Reading from the N-terminus, the 174-residue chain is Ribosome maturation factor RimM (174 aa).

Residues 98–172 (AGEYYYHQIV…VVTVELMEGL (75 aa)) enclose the PRC barrel domain.

Belongs to the RimM family. As to quaternary structure, binds ribosomal protein uS19.

It localises to the cytoplasm. Functionally, an accessory protein needed during the final step in the assembly of 30S ribosomal subunit, possibly for assembly of the head region. Essential for efficient processing of 16S rRNA. May be needed both before and after RbfA during the maturation of 16S rRNA. It has affinity for free ribosomal 30S subunits but not for 70S ribosomes. This Lactiplantibacillus plantarum (strain ATCC BAA-793 / NCIMB 8826 / WCFS1) (Lactobacillus plantarum) protein is Ribosome maturation factor RimM.